We begin with the raw amino-acid sequence, 283 residues long: Light-independent protochlorophyllide reductase iron-sulfur ATP-binding protein (283 aa).

ATP contacts are provided by residues 15–20 (GIGKST) and K44. S19 is a Mg(2+) binding site. [4Fe-4S] cluster-binding residues include C100 and C134. 185–186 (NR) is a binding site for ATP.

The protein belongs to the NifH/BchL/ChlL family. Homodimer. Protochlorophyllide reductase is composed of three subunits; ChlL, ChlN and ChlB. It depends on [4Fe-4S] cluster as a cofactor.

The catalysed reaction is chlorophyllide a + oxidized 2[4Fe-4S]-[ferredoxin] + 2 ADP + 2 phosphate = protochlorophyllide a + reduced 2[4Fe-4S]-[ferredoxin] + 2 ATP + 2 H2O. Its pathway is porphyrin-containing compound metabolism; chlorophyll biosynthesis (light-independent). In terms of biological role, component of the dark-operative protochlorophyllide reductase (DPOR) that uses Mg-ATP and reduced ferredoxin to reduce ring D of protochlorophyllide (Pchlide) to form chlorophyllide a (Chlide). This reaction is light-independent. The L component serves as a unique electron donor to the NB-component of the complex, and binds Mg-ATP. This is Light-independent protochlorophyllide reductase iron-sulfur ATP-binding protein from Synechococcus sp. (strain JA-2-3B'a(2-13)) (Cyanobacteria bacterium Yellowstone B-Prime).